Consider the following 60-residue polypeptide: Mastoparan-D (60 aa).

An N-terminal signal peptide occupies residues 1–27 (MKNTILILFTAFIALLGFFGMSAEALA). AXPX repeat units lie at residues 27-30 (ADPI), 31-34 (ADPV), 35-38 (AGPN), and 41-44 (ADPE). Residues 28 to 45 (DPIADPVAGPNPEADPEA) constitute a propeptide that is removed on maturation. Leu59 is modified (leucine amide).

It belongs to the MCD family. Mastoparan subfamily. As to expression, expressed by the venom gland.

It is found in the secreted. The protein resides in the target cell membrane. Its function is as follows. Antimicrobial and mast cell degranulating peptide. Has broad spectrum antibacterial activity against both Gram-positive and Gram-negative bacteria (S.aureus MIC=24-32 ug/ml, S.xylosus MIC=2 ug/ml, S.alactolyticus MIC=16 ug/ml, C.koseri MIC=4 ug/ml, E.coli MIC=8 ug/ml, K.pneumoniae MIC=32 ug/ml, P.aerugiosa MIC=128 ug/ml, S.choleraesuis MIC=16 ug/ml, S.typhimurium MIC=32 ug/ml, V.parahamelytics MIC=32 ug/ml). Affects membrane permeability of E.coli. Shows hemolytic activities on sheep, chicken and human erythrocytes. Its mast cell degranulation activity may be related to the activation of G-protein coupled receptors in mast cells as well as interaction with other proteins located in cell endosomal membranes in the mast cells. The protein is Mastoparan-D of Vespa ducalis (Black-tailed hornet).